The following is a 1116-amino-acid chain: Pleckstrin homology domain-containing family A member 5 (1116 aa).

Ala2 carries the N-acetylalanine modification. Positions 10 to 43 (ISLPRSWTYGITRGGRVFFINEEAKSTTWLHPVT) constitute a WW 1 domain. Ser55 carries the phosphoserine modification. The WW 2 domain maps to 56-89 (TDLPTGWEEAYTFEGARYYINHNERKVTCKHPVT). The tract at residues 140 to 163 (SPVGRTSRASKKVHNFGKRSNSIK) is disordered. Residues 147 to 156 (RASKKVHNFG) show a composition bias toward basic residues. One can recognise a PH domain in the interval 169–268 (PVVRRGWLYK…WMKAMLDAAL (100 aa)). A Glycyl lysine isopeptide (Lys-Gly) (interchain with G-Cter in SUMO2) cross-link involves residue Lys301. 2 positions are modified to phosphoserine: Ser382 and Ser410. Phosphothreonine occurs at positions 438 and 460. Residues 459–495 (RTLPRNSKTRPESICSVTPSTHDKTLGPGAEEKRRSM) form a disordered region. The span at 479 to 495 (THDKTLGPGAEEKRRSM) shows a compositional bias: basic and acidic residues. 6 positions are modified to phosphoserine: Ser568, Ser607, Ser809, Ser855, Ser933, and Ser937. Disordered stretches follow at residues 928 to 978 (GASD…PATE) and 1025 to 1116 (RNKD…FMCV). The segment covering 930–949 (SDQSPLQSPSNLRDNPFRTT) has biased composition (polar residues). The span at 952–978 (RRRDDKELDTAIRENDVKPDHETPATE) shows a compositional bias: basic and acidic residues. A compositionally biased stretch (polar residues) spans 1036–1046 (FSPQDETQTAN). The segment covering 1047–1061 (HKPEEHPEENTKNSV) has biased composition (basic and acidic residues). Residues 1070 to 1085 (SYESTPEVSRGNQTMA) show a composition bias toward polar residues. Over residues 1088 to 1101 (SLSPSPESSASPVP) the composition is skewed to low complexity.

In terms of tissue distribution, highly expressed in heart and kidney.

The protein localises to the cytoplasm. The sequence is that of Pleckstrin homology domain-containing family A member 5 (PLEKHA5) from Homo sapiens (Human).